Consider the following 306-residue polypeptide: Tryptophan 2,3-dioxygenase (306 aa).

Residues 75 to 79 (FIIQH), Tyr-137, and Arg-141 contribute to the substrate site. His-264 lines the heme pocket. Substrate is bound at residue Thr-278.

The protein belongs to the tryptophan 2,3-dioxygenase family. In terms of assembly, homotetramer. Heme is required as a cofactor.

The enzyme catalyses L-tryptophan + O2 = N-formyl-L-kynurenine. It functions in the pathway amino-acid degradation; L-tryptophan degradation via kynurenine pathway; L-kynurenine from L-tryptophan: step 1/2. Heme-dependent dioxygenase that catalyzes the oxidative cleavage of the L-tryptophan (L-Trp) pyrrole ring and converts L-tryptophan to N-formyl-L-kynurenine. Catalyzes the oxidative cleavage of the indole moiety. In Paraburkholderia phytofirmans (strain DSM 17436 / LMG 22146 / PsJN) (Burkholderia phytofirmans), this protein is Tryptophan 2,3-dioxygenase.